We begin with the raw amino-acid sequence, 271 residues long: 3-methyl-2-oxobutanoate hydroxymethyltransferase (271 aa).

2 residues coordinate Mg(2+): Asp51 and Asp90. 3-methyl-2-oxobutanoate is bound by residues 51 to 52 (DS), Asp90, and Lys118. Glu120 lines the Mg(2+) pocket. Glu186 acts as the Proton acceptor in catalysis.

It belongs to the PanB family. As to quaternary structure, homodecamer; pentamer of dimers. Requires Mg(2+) as cofactor.

It is found in the cytoplasm. The enzyme catalyses 3-methyl-2-oxobutanoate + (6R)-5,10-methylene-5,6,7,8-tetrahydrofolate + H2O = 2-dehydropantoate + (6S)-5,6,7,8-tetrahydrofolate. It functions in the pathway cofactor biosynthesis; (R)-pantothenate biosynthesis; (R)-pantoate from 3-methyl-2-oxobutanoate: step 1/2. Functionally, catalyzes the reversible reaction in which hydroxymethyl group from 5,10-methylenetetrahydrofolate is transferred onto alpha-ketoisovalerate to form ketopantoate. This chain is 3-methyl-2-oxobutanoate hydroxymethyltransferase, found in Xanthomonas oryzae pv. oryzae (strain MAFF 311018).